A 320-amino-acid chain; its full sequence is o-succinylbenzoate synthase (320 aa).

K133 serves as the catalytic Proton donor. Residues D161, E190, and D213 each coordinate Mg(2+). Residue K235 is the Proton acceptor of the active site.

The protein belongs to the mandelate racemase/muconate lactonizing enzyme family. MenC type 1 subfamily. It depends on a divalent metal cation as a cofactor.

It catalyses the reaction (1R,6R)-6-hydroxy-2-succinyl-cyclohexa-2,4-diene-1-carboxylate = 2-succinylbenzoate + H2O. It participates in quinol/quinone metabolism; 1,4-dihydroxy-2-naphthoate biosynthesis; 1,4-dihydroxy-2-naphthoate from chorismate: step 4/7. The protein operates within quinol/quinone metabolism; menaquinone biosynthesis. Its function is as follows. Converts 2-succinyl-6-hydroxy-2,4-cyclohexadiene-1-carboxylate (SHCHC) to 2-succinylbenzoate (OSB). The protein is o-succinylbenzoate synthase of Escherichia coli O7:K1 (strain IAI39 / ExPEC).